A 316-amino-acid chain; its full sequence is Apolipoprotein E (316 aa).

Positions 1-18 are cleaved as a signal peptide; sequence MKVLWVALVITLLAGCQA. Tandem repeats lie at residues 79 to 100, 101 to 122, 123 to 144, 145 to 166, 167 to 188, 189 to 210, 211 to 232, and 233 to 254. The tract at residues 79–254 is 8 X 22 AA approximate tandem repeats; that stretch reads VLMDETMKEV…HLEEMREQLE (176 aa). At methionine 142 the chain carries Methionine sulfoxide. An LDL and other lipoprotein receptors binding region spans residues 157-167; that stretch reads HLRKLRKRLLR. 161 to 164 contacts heparin; it reads LRKR. The lipid-binding and lipoprotein association stretch occupies residues 209 to 289; sequence AATVGTLASQ…SWFEPLVEDM (81 aa). 228 to 235 provides a ligand contact to heparin; the sequence is HQKLRGRM. A homooligomerization region spans residues 265–316; sequence SQMRLQAEAFQARLKSWFEPLVEDMQRQWAGLVEKVQLAMATSPTSAPIENS. The interval 277–289 is specificity for association with VLDL; that stretch reads RLKSWFEPLVEDM.

It belongs to the apolipoprotein A1/A4/E family. Homotetramer. May interact with ABCA1; functionally associated with ABCA1 in the biogenesis of HDLs. May interact with APP/A4 amyloid-beta peptide; the interaction is extremely stable in vitro but its physiological significance is unclear. May interact with MAPT. May interact with MAP2. In the cerebrospinal fluid, interacts with secreted SORL1. Interacts with PMEL; this allows the loading of PMEL luminal fragment on ILVs to induce fibril nucleation. APOE exists as multiple glycosylated and sialylated glycoforms within cells and in plasma. The extent of glycosylation and sialylation are tissue and context specific. In terms of processing, glycated in plasma VLDL. Post-translationally, phosphorylated by FAM20C in the extracellular medium.

The protein resides in the secreted. The protein localises to the extracellular space. Its subcellular location is the extracellular matrix. It is found in the extracellular vesicle. It localises to the endosome. The protein resides in the multivesicular body. APOE is an apolipoprotein, a protein associating with lipid particles, that mainly functions in lipoprotein-mediated lipid transport between organs via the plasma and interstitial fluids. APOE is a core component of plasma lipoproteins and is involved in their production, conversion and clearance. Apolipoproteins are amphipathic molecules that interact both with lipids of the lipoprotein particle core and the aqueous environment of the plasma. As such, APOE associates with chylomicrons, chylomicron remnants, very low density lipoproteins (VLDL) and intermediate density lipoproteins (IDL) but shows a preferential binding to high-density lipoproteins (HDL). It also binds a wide range of cellular receptors including the LDL receptor/LDLR and the very low-density lipoprotein receptor/VLDLR that mediate the cellular uptake of the APOE-containing lipoprotein particles. Finally, APOE also has a heparin-binding activity and binds heparan-sulfate proteoglycans on the surface of cells, a property that supports the capture and the receptor-mediated uptake of APOE-containing lipoproteins by cells. The polypeptide is Apolipoprotein E (APOE) (Orcinus orca (Killer whale)).